Consider the following 154-residue polypeptide: Fluoride-specific ion channel FluC 1 (154 aa).

A run of 4 helical transmembrane segments spans residues 28–48 (VVAV…AASL), 59–79 (WTTF…MVVI), 91–111 (PFFG…AVDS), and 124–144 (LAYL…AAWA). Residues Gly-99 and Thr-102 each contribute to the Na(+) site.

The protein belongs to the fluoride channel Fluc/FEX (TC 1.A.43) family.

The protein resides in the cell membrane. The catalysed reaction is fluoride(in) = fluoride(out). Na(+) is not transported, but it plays an essential structural role and its presence is essential for fluoride channel function. In terms of biological role, fluoride-specific ion channel. Important for reducing fluoride concentration in the cell, thus reducing its toxicity. The polypeptide is Fluoride-specific ion channel FluC 1 (Streptomyces coelicolor (strain ATCC BAA-471 / A3(2) / M145)).